A 344-amino-acid chain; its full sequence is Endo-1,4-beta-xylanase UM03411 (344 aa).

Residues 1 to 21 (MKTNFLVLLSALLAASSAVTA) form the signal peptide. Positions 35 to 338 (QRAGSSLNAA…KPAYNAVLST (304 aa)) constitute a GH10 domain. The active-site Proton donor is the Glu-166. A glycan (N-linked (GlcNAc...) asparagine) is linked at Asn-171. The active-site Nucleophile is Glu-275. A disulfide bridge connects residues Cys-293 and Cys-299. Residues Asn-310 and Asn-323 are each glycosylated (N-linked (GlcNAc...) asparagine).

The protein belongs to the glycosyl hydrolase 10 (cellulase F) family.

The protein localises to the secreted. The enzyme catalyses Endohydrolysis of (1-&gt;4)-beta-D-xylosidic linkages in xylans.. The protein operates within glycan degradation; xylan degradation. Functionally, endo-1,4-beta-xylanase involved in the hydrolysis of xylan, a major structural heterogeneous polysaccharide found in plant biomass representing the second most abundant polysaccharide in the biosphere, after cellulose. This is Endo-1,4-beta-xylanase UM03411 from Mycosarcoma maydis (Corn smut fungus).